Consider the following 226-residue polypeptide: Glutathione S-transferase kappa 1 (226 aa).

Residues Ser-15 to Tyr-17, Asn-53, and Ser-199 to Asp-200 each bind glutathione.

It belongs to the GST superfamily. Kappa family.

It catalyses the reaction RX + glutathione = an S-substituted glutathione + a halide anion + H(+). This is Glutathione S-transferase kappa 1 (gstk-1) from Caenorhabditis elegans.